Reading from the N-terminus, the 827-residue chain is Periplasmic nitrate reductase (827 aa).

Positions 1–34 form a signal peptide, tat-type signal; sequence MSLTRRDFIKANAVPATAAAAGLATPAIAQPAKA. A 4Fe-4S Mo/W bis-MGD-type domain is found at 36–92; it reads IRWDKGVCRFCGTGCSVLVGVQDGRVVATQGDPDSPVNRGLNCIKGYFLSKIMYGED. C43, C46, C50, and C78 together coordinate [4Fe-4S] cluster. Residues K80, Q148, N173, C177, 210–217, 241–245, 260–262, M371, Q375, N481, 507–508, K530, D557, and 717–726 each bind Mo-bis(molybdopterin guanine dinucleotide); these read WGSNMAEM, STFEH, QTD, SD, and TGRVLEHWHS. F793 contacts substrate. Mo-bis(molybdopterin guanine dinucleotide) contacts are provided by N801 and K818.

Belongs to the prokaryotic molybdopterin-containing oxidoreductase family. NasA/NapA/NarB subfamily. Component of the periplasmic nitrate reductase NapAB complex composed of NapA and NapB. It depends on [4Fe-4S] cluster as a cofactor. Mo-bis(molybdopterin guanine dinucleotide) serves as cofactor. In terms of processing, predicted to be exported by the Tat system. The position of the signal peptide cleavage has not been experimentally proven.

It is found in the periplasm. The enzyme catalyses 2 Fe(II)-[cytochrome] + nitrate + 2 H(+) = 2 Fe(III)-[cytochrome] + nitrite + H2O. Its function is as follows. Catalytic subunit of the periplasmic nitrate reductase complex NapAB. Receives electrons from NapB and catalyzes the reduction of nitrate to nitrite. The chain is Periplasmic nitrate reductase from Paramagnetospirillum magnetotacticum (Aquaspirillum magnetotacticum).